A 313-amino-acid polypeptide reads, in one-letter code: Synaptophysin (313 aa).

The Cytoplasmic portion of the chain corresponds to 1-25 (MLLLADMDVVNQLVAGGQFRVVKEP). One can recognise an MARVEL domain in the interval 21–227 (VVKEPLGFVK…NLWFVFKETG (207 aa)). A helical membrane pass occupies residues 26–49 (LGFVKVLQWVFAIFAFATCGSYSG). At 50-106 (ELQLSVDCANKTKSDLNIEVEFEYPFRLHEVYFEAPTCQGDPKKIFLVGNYSSSAEF) the chain is on the vesicular side. Asn59 carries N-linked (GlcNAc...) asparagine glycosylation. Tyr81 carries the phosphotyrosine modification. Asn99 carries an N-linked (GlcNAc...) asparagine glycan. The chain crosses the membrane as a helical span at residues 107–130 (FVTVAVFAFLYSMGALATYIFLQN). The Cytoplasmic portion of the chain corresponds to 131-137 (KYRENNK). A helical transmembrane segment spans residues 138 to 161 (GPMLDFLATAVFAFMWLVSSSAWA). Residues 162-199 (KGLSDVKMATDPENIIKGMHVCHQPGNTCKELRDPVTS) are Vesicular-facing. A helical transmembrane segment spans residues 200–223 (GLNTSVVFGFLNLVLWVGNLWFVF). Residues 224–313 (KETGWAAPFL…GAPTSFSNQM (90 aa)) lie on the Cytoplasmic side of the membrane. Positions 238 to 313 (GAPEKQPAPG…GAPTSFSNQM (76 aa)) are disordered. The segment covering 253–263 (AGYGQGPGGYG) has biased composition (gly residues). The segment at 254-304 (GYGQGPGGYGPQDSYGPQGGYQPDYGQPASSGGGGYGPQGDYGQQGYGPQG) is repeats, Gly/Tyr-rich. Over residues 264–283 (PQDSYGPQGGYQPDYGQPAS) the composition is skewed to low complexity. Positions 284–302 (SGGGGYGPQGDYGQQGYGP) are enriched in gly residues.

The protein belongs to the synaptophysin/synaptobrevin family. In terms of assembly, homohexamer or homotetramer. Interacts with SRCIN1. Interacts with VAMP2; the interaction is inhibited by interaction of VAPM2 with SEPT8. Ubiquitinated; mediated by SIAH1 or SIAH2 and leading to its subsequent proteasomal degradation. In terms of processing, phosphorylated by SRC. As to expression, characteristic of a type of small (30-80 nm) neurosecretory vesicles, including presynaptic vesicles, but also vesicles of various neuroendocrine cells of both neuronal and epithelial phenotype.

The protein resides in the cytoplasmic vesicle. It is found in the secretory vesicle. It localises to the synaptic vesicle membrane. Its subcellular location is the synapse. The protein localises to the synaptosome. Functionally, possibly involved in structural functions as organizing other membrane components or in targeting the vesicles to the plasma membrane. Involved in the regulation of short-term and long-term synaptic plasticity. In Bos taurus (Bovine), this protein is Synaptophysin (SYP).